The primary structure comprises 549 residues: Glucose-6-phosphate isomerase (549 aa).

Residue Glu355 is the Proton donor of the active site. Catalysis depends on residues His386 and Lys514.

Belongs to the GPI family.

The protein localises to the cytoplasm. It carries out the reaction alpha-D-glucose 6-phosphate = beta-D-fructose 6-phosphate. It participates in carbohydrate biosynthesis; gluconeogenesis. Its pathway is carbohydrate degradation; glycolysis; D-glyceraldehyde 3-phosphate and glycerone phosphate from D-glucose: step 2/4. Catalyzes the reversible isomerization of glucose-6-phosphate to fructose-6-phosphate. In Sodalis glossinidius (strain morsitans), this protein is Glucose-6-phosphate isomerase.